We begin with the raw amino-acid sequence, 60 residues long: Large ribosomal subunit protein uL30 (60 aa).

This sequence belongs to the universal ribosomal protein uL30 family. Part of the 50S ribosomal subunit.

In Streptomyces filamentosus (Streptomyces roseosporus), this protein is Large ribosomal subunit protein uL30.